A 416-amino-acid polypeptide reads, in one-letter code: Chorismate synthase (416 aa).

Residues Arg40 and Arg46 each coordinate NADP(+). Residues 135–137, 256–257, Gly300, 315–319, and Arg341 each bind FMN; these read RAS, QA, and KPIAT.

This sequence belongs to the chorismate synthase family. In terms of assembly, homotetramer. Requires FMNH2 as cofactor.

The catalysed reaction is 5-O-(1-carboxyvinyl)-3-phosphoshikimate = chorismate + phosphate. It participates in metabolic intermediate biosynthesis; chorismate biosynthesis; chorismate from D-erythrose 4-phosphate and phosphoenolpyruvate: step 7/7. Catalyzes the anti-1,4-elimination of the C-3 phosphate and the C-6 proR hydrogen from 5-enolpyruvylshikimate-3-phosphate (EPSP) to yield chorismate, which is the branch point compound that serves as the starting substrate for the three terminal pathways of aromatic amino acid biosynthesis. This reaction introduces a second double bond into the aromatic ring system. The chain is Chorismate synthase from Kocuria rhizophila (strain ATCC 9341 / DSM 348 / NBRC 103217 / DC2201).